A 224-amino-acid polypeptide reads, in one-letter code: 7-cyano-7-deazaguanine synthase (224 aa).

Residue isoleucine 9–alanine 19 participates in ATP binding. The Zn(2+) site is built by cysteine 190, cysteine 198, cysteine 201, and cysteine 204.

This sequence belongs to the QueC family. Zn(2+) serves as cofactor.

It carries out the reaction 7-carboxy-7-deazaguanine + NH4(+) + ATP = 7-cyano-7-deazaguanine + ADP + phosphate + H2O + H(+). It functions in the pathway purine metabolism; 7-cyano-7-deazaguanine biosynthesis. In terms of biological role, catalyzes the ATP-dependent conversion of 7-carboxy-7-deazaguanine (CDG) to 7-cyano-7-deazaguanine (preQ(0)). The chain is 7-cyano-7-deazaguanine synthase from Campylobacter jejuni (strain RM1221).